The following is a 456-amino-acid chain: tRNA (guanine(37)-N(1))-methyltransferase (456 aa).

S-adenosyl-L-methionine is bound by residues H246, 284–285 (DL), 310–311 (DG), and N336.

The protein belongs to the class I-like SAM-binding methyltransferase superfamily. TRM5/TYW2 family. Monomer.

The protein localises to the mitochondrion matrix. It localises to the nucleus. The protein resides in the cytoplasm. The catalysed reaction is guanosine(37) in tRNA + S-adenosyl-L-methionine = N(1)-methylguanosine(37) in tRNA + S-adenosyl-L-homocysteine + H(+). In terms of biological role, specifically methylates the N1 position of guanosine-37 in various cytoplasmic and mitochondrial tRNAs. Methylation is not dependent on the nature of the nucleoside 5' of the target nucleoside. This is the first step in the biosynthesis of wybutosine (yW), a modified base adjacent to the anticodon of tRNAs and required for accurate decoding. The polypeptide is tRNA (guanine(37)-N(1))-methyltransferase (Ciona intestinalis (Transparent sea squirt)).